The chain runs to 235 residues: 6-phosphogluconolactonase (235 aa).

This sequence belongs to the glucosamine/galactosamine-6-phosphate isomerase family. 6-phosphogluconolactonase subfamily.

It catalyses the reaction 6-phospho-D-glucono-1,5-lactone + H2O = 6-phospho-D-gluconate + H(+). It functions in the pathway carbohydrate degradation; pentose phosphate pathway; D-ribulose 5-phosphate from D-glucose 6-phosphate (oxidative stage): step 2/3. Functionally, hydrolysis of 6-phosphogluconolactone to 6-phosphogluconate. The protein is 6-phosphogluconolactonase (pgl) of Borreliella burgdorferi (strain ATCC 35210 / DSM 4680 / CIP 102532 / B31) (Borrelia burgdorferi).